A 313-amino-acid polypeptide reads, in one-letter code: Trimeric intracellular cation channel type 1B.2 (313 aa).

The Lumenal portion of the chain corresponds to 1-28; sequence MGWVPDEWSIDHDTLIDAGGYVQKLKLY. The helical transmembrane segment at 29–48 threads the bilayer; sequence PYFDAAHYVLTCLSVRHDLG. Over 49-57 the chain is Cytoplasmic; that stretch reads PDAISFSRK. Residues 58–82 traverse the membrane as a discontinuously helical segment; the sequence is HPFSCWLSCMLMSFAGSFLSCFLLG. The Lumenal segment spans residues 83–90; the sequence is EPIISPLK. A helical transmembrane segment spans residues 91–108; sequence QHADILLGSIVWYLVFYS. Topologically, residues 109-118 are cytoplasmic; the sequence is PFDVVFRLAT. Residues 119–149 traverse the membrane as a helical segment; sequence WFPVKLGLSVLKEVQRTHKIAAGVKHAVRIY. A 1,2-diacyl-sn-glycero-3-phospho-(1D-myo-inositol-4,5-bisphosphate) is bound by residues Lys130 and Arg134. At 150–151 the chain is on the lumenal side; that stretch reads PE. The chain crosses the membrane as a discontinuously helical span at residues 152–178; the sequence is SYLVQILVGVAKGAGSGVVKIVEQLAR. Residue Gly168 participates in a 1,2-diacyl-sn-glycero-3-phospho-(1D-myo-inositol-4,5-bisphosphate) binding. Over 179–192 the chain is Cytoplasmic; that stretch reads GTWHPTNHEILRPS. A helical membrane pass occupies residues 193–210; the sequence is FTTKACVIASIVFTLERH. The Lumenal portion of the chain corresponds to 211–216; that stretch reads SMYVTA. The helical transmembrane segment at 217-239 threads the bilayer; it reads PHDLVYLCVVGFFIYFKLASLCL. At 240-313 the chain is on the cytoplasmic side; it reads SVHDVLMPIE…MSNGTDKKNN (74 aa).

It belongs to the TMEM38 family. As to quaternary structure, homotrimer; trimerization probably requires binding to phosphatidylinositol 4,5-bisphosphate (PIP2).

The protein resides in the endoplasmic reticulum membrane. Its function is as follows. Potassium channel that mediates transmembrane potassium transport. Might be required for maintenance of rapid intracellular calcium release. May act as a potassium counter-ion channel that functions in synchronization with calcium release from intracellular stores. Binds phosphatidylinositol 4,5-bisphosphate (PIP2). The chain is Trimeric intracellular cation channel type 1B.2 from Caenorhabditis elegans.